The chain runs to 209 residues: Phosphoheptose isomerase (209 aa).

Residues 50-209 (IAETFRNGGK…ELVESMMGYA (160 aa)) enclose the SIS domain. A substrate-binding site is contributed by 65–67 (NGG). Zn(2+) contacts are provided by His74 and Glu78. Residues Glu78, 109–110 (ND), 135–137 (STS), Ser140, and Gln188 contribute to the substrate site. Zn(2+) contacts are provided by Gln188 and His196.

This sequence belongs to the SIS family. GmhA subfamily. Requires Zn(2+) as cofactor.

The protein resides in the cytoplasm. It carries out the reaction 2 D-sedoheptulose 7-phosphate = D-glycero-alpha-D-manno-heptose 7-phosphate + D-glycero-beta-D-manno-heptose 7-phosphate. It functions in the pathway carbohydrate biosynthesis; D-glycero-D-manno-heptose 7-phosphate biosynthesis; D-glycero-alpha-D-manno-heptose 7-phosphate and D-glycero-beta-D-manno-heptose 7-phosphate from sedoheptulose 7-phosphate: step 1/1. In terms of biological role, catalyzes the isomerization of sedoheptulose 7-phosphate in D-glycero-D-manno-heptose 7-phosphate. The protein is Phosphoheptose isomerase of Chlorobaculum parvum (strain DSM 263 / NCIMB 8327) (Chlorobium vibrioforme subsp. thiosulfatophilum).